Here is a 305-residue protein sequence, read N- to C-terminus: tRNA dimethylallyltransferase (305 aa).

Residue 15-22 coordinates ATP; the sequence is GPTASGKS. A substrate-binding site is contributed by 17–22; it reads TASGKS. Interaction with substrate tRNA regions lie at residues 40–43 and 164–168; these read DSMQ and QRIVR.

The protein belongs to the IPP transferase family. Monomer. The cofactor is Mg(2+).

The enzyme catalyses adenosine(37) in tRNA + dimethylallyl diphosphate = N(6)-dimethylallyladenosine(37) in tRNA + diphosphate. Functionally, catalyzes the transfer of a dimethylallyl group onto the adenine at position 37 in tRNAs that read codons beginning with uridine, leading to the formation of N6-(dimethylallyl)adenosine (i(6)A). This is tRNA dimethylallyltransferase from Sinorhizobium medicae (strain WSM419) (Ensifer medicae).